We begin with the raw amino-acid sequence, 305 residues long: Sulfate adenylyltransferase subunit 2 (305 aa).

This sequence belongs to the PAPS reductase family. CysD subfamily. As to quaternary structure, heterodimer composed of CysD, the smaller subunit, and CysN.

It catalyses the reaction sulfate + ATP + H(+) = adenosine 5'-phosphosulfate + diphosphate. Its pathway is sulfur metabolism; hydrogen sulfide biosynthesis; sulfite from sulfate: step 1/3. In terms of biological role, with CysN forms the ATP sulfurylase (ATPS) that catalyzes the adenylation of sulfate producing adenosine 5'-phosphosulfate (APS) and diphosphate, the first enzymatic step in sulfur assimilation pathway. APS synthesis involves the formation of a high-energy phosphoric-sulfuric acid anhydride bond driven by GTP hydrolysis by CysN coupled to ATP hydrolysis by CysD. This chain is Sulfate adenylyltransferase subunit 2, found in Pseudomonas fluorescens (strain Pf0-1).